A 401-amino-acid chain; its full sequence is Collagen and calcium-binding EGF domain-containing protein 1 (401 aa).

A signal peptide spans 1–22; sequence MIYPGRGASLSVAVALVLFSSG. Residues 126-167 enclose the EGF-like; calcium-binding domain; it reads DIDECANNNETVCSQMCVNTPGSYRCDCHSGFYLEDDGKTCT. Disulfide bonds link Cys130–Cys142, Cys138–Cys151, and Cys153–Cys166. N-linked (GlcNAc...) asparagine glycosylation occurs at Asn134. Disordered stretches follow at residues 229–321 and 344–401; these read TTNS…PGSF and SRPL…DWPV. Collagen-like domains lie at 234-276 and 286-319; these read LPGP…PIGP and GRRG…GPPG. The segment covering 235-244 has biased composition (pro residues); the sequence is PGPPGPPGPA. Over residues 246–258 the composition is skewed to low complexity; sequence TPGAKGSSGSPGQ.

The protein belongs to the CCBE1 family. Not expressed in blood or lymphatic endothelial cells, correlating spatially and temporally with the migration routes of endothelial cells that bud from the PCV, migrate in association with somite boundaries and seed the horizontal myoseptum region from where lymphatic precursors later migrate.

The protein resides in the secreted. Its function is as follows. Required for lymphangioblast budding and angiogenic sprouting from venous endothelium during embryogenesis. Required for the formation of facial lymphatic structures. Necessary for lymphangiogenesis, but is probably not part of either the vegfc-vegfr3 signaling or sox18-prox1 transcriptional pathways. In Danio rerio (Zebrafish), this protein is Collagen and calcium-binding EGF domain-containing protein 1 (ccbe1).